The following is a 277-amino-acid chain: Reaction center protein L chain (277 aa).

The next 3 helical transmembrane spans lie at 30–52, 84–106, and 113–135; these read FYVGIFGVMTVFFALIGIALIAW, GGIWQWVSICATGAFVTWALREV, and GIGFHVPFAFSFAIFAYVTLVVI. (7R,8Z)-bacteriochlorophyll b-binding residues include His154 and His174. The chain crosses the membrane as a helical span at residues 173–195; the sequence is AHMIAITFFFTTCLALALHGGLV. His191 provides a ligand contact to Fe cation. Phe217 provides a ligand contact to a ubiquinone. His231 is a Fe cation binding site. A helical membrane pass occupies residues 233–255; it reads LGLFLALSAVFFSAVCMIISGPV.

It belongs to the reaction center PufL/M/PsbA/D family. In terms of assembly, reaction center is composed of four bacteriochlorophylls, two bacteriopheophytins, two ubiquinones, one iron, and three highly hydrophobic polypeptide chains (designated L, M, and H).

It localises to the cellular chromatophore membrane. Its function is as follows. The reaction center is a membrane-bound complex that mediates the initial photochemical event in the electron transfer process of photosynthesis. The polypeptide is Reaction center protein L chain (pufL) (Rhodopseudomonas palustris (strain ATCC BAA-98 / CGA009)).